A 332-amino-acid chain; its full sequence is Processive diacylglycerol alpha-glucosyltransferase (332 aa).

It belongs to the glycosyltransferase group 1 family. Glycosyltransferase 4 subfamily. Mg(2+) is required as a cofactor.

Its subcellular location is the cell membrane. It catalyses the reaction a 1,2-diacyl-sn-glycerol + UDP-alpha-D-glucose = a 1,2-diacyl-3-O-(alpha-D-glucopyranosyl)-sn-glycerol + UDP + H(+). It carries out the reaction a 1,2-diacyl-3-O-(alpha-D-glucopyranosyl)-sn-glycerol + UDP-alpha-D-glucose = a 1,2-diacyl-3-O-[alpha-D-glucosyl-(1-&gt; 2)-alpha-D-glucosyl]-sn-glycerol + UDP + H(+). It functions in the pathway glycolipid metabolism; diglucosyl-diacylglycerol biosynthesis. Activated by the negatively charged lipids phosphatidylglycerol (PG), cardiolipin (CL), nonbilayer-prone 1,3-DAG, 1,2-dioleoylphosphatidylglycerol (DOPG) and 1,2-dioleoylphosphatidylserine (DOPS). Inhibited by 1,2-diacyl-3-O-(alpha-D-galactopyranosyl)-sn-glycerol, 1,2-diacyl-3-O-[6-O-acyl(alpha-D-glucopyranosyl)]-sn-glycerol and 1,2-diacyl-3-O-[alpha-D-glucopyranosyl-(1-&gt;2)-O-(6-O-acyl-alpha-D-glucopyranosyl)]-sn-glycerol. Functionally, processive glucosyltransferase involved in the biosynthesis of both the non-bilayer-prone alpha-monoglucosyldiacylglycerol and the bilayer-forming membrane lipid alpha-diglucosyldiacylglycerol. These are major components for maintaining the anionic lipid surface charge density, for balancing the bilayer to non-bilayer phase equilibria and for keeping a constant lipid bilayer spontaneous curvature (curvature packing stress). Catalyzes the transfer of a glucosyl residue from UDP-Glc to diacylglycerol (DAG) acceptor to form the corresponding alpha-glucosyl-DAG (1,2-diacyl-3-O-(alpha-D-glucopyranosyl)-sn-glycerol), which then acts as acceptor to give alpha-diglucosyl-DAG product (3-O-(alpha-D-glucopyranosyl-alpha-(1-&gt;2)-D-glucopyranosyl)-1,2-diacyl-sn-glycerol). It can only use UDP-Glc as sugar donor. This is Processive diacylglycerol alpha-glucosyltransferase (dgs) from Acholeplasma laidlawii.